Here is a 374-residue protein sequence, read N- to C-terminus: MLNRPSSPDGGEAHAWPPDPEIPVFANAEHAHRRPLRWMFALVAVALSCLLATGIWRSRAAPPHAATQTVAPAGQALPPGRIFTVHPREPEPAPLPDMPAAPDPILPQPRPAPPVPPPPIRAPYDYDEPAPRRDSAALKSGPAMMVATAARLGQTERAGMADDGVSADAATLIGRNVSRATRSGDRDYRLLPGTFIDCILQTRIVTNVPGLTTCIVSRDVYSASGKRVLVPRGTTVVGEYRADLAQGSQRIYVAWSRLFMPSGLTIELASPAVDGTGAAGLPGVVDDKFAQRFGGALLLSVLGDATSYMLARATDARHGVNVNLTAAGTMNSLAASALNNTINIPPTLYKNHGDQIGILVARPLDFSILRGTNE.

A helical membrane pass occupies residues Trp38–Trp56. The segment at His86–Pro117 is disordered. The segment covering Pro92 to Pro117 has biased composition (pro residues).

It belongs to the TrbI/VirB10 family.

Its subcellular location is the cell membrane. This is Type IV secretion system protein PtlG homolog (ptlG) from Bordetella bronchiseptica (strain ATCC BAA-588 / NCTC 13252 / RB50) (Alcaligenes bronchisepticus).